The primary structure comprises 218 residues: N-(5'-phosphoribosyl)anthranilate isomerase (218 aa).

Belongs to the TrpF family.

It catalyses the reaction N-(5-phospho-beta-D-ribosyl)anthranilate = 1-(2-carboxyphenylamino)-1-deoxy-D-ribulose 5-phosphate. It functions in the pathway amino-acid biosynthesis; L-tryptophan biosynthesis; L-tryptophan from chorismate: step 3/5. This is N-(5'-phosphoribosyl)anthranilate isomerase from Rhodopseudomonas palustris (strain HaA2).